A 410-amino-acid chain; its full sequence is UDP-N-acetylglucosamine--N-acetylmuramyl-(pentapeptide) pyrophosphoryl-undecaprenol N-acetylglucosamine transferase (410 aa).

Residues 1 to 35 (MKDTVSQPAGGRGATAPRPADAASPSCGSSPSADS) are disordered. The segment covering 14–35 (ATAPRPADAASPSCGSSPSADS) has biased composition (low complexity). UDP-N-acetyl-alpha-D-glucosamine is bound by residues 45 to 47 (TAG), Asn-167, Arg-204, Ser-238, and Gln-334.

The protein belongs to the glycosyltransferase 28 family. MurG subfamily.

It localises to the cell membrane. The enzyme catalyses di-trans,octa-cis-undecaprenyl diphospho-N-acetyl-alpha-D-muramoyl-L-alanyl-D-glutamyl-meso-2,6-diaminopimeloyl-D-alanyl-D-alanine + UDP-N-acetyl-alpha-D-glucosamine = di-trans,octa-cis-undecaprenyl diphospho-[N-acetyl-alpha-D-glucosaminyl-(1-&gt;4)]-N-acetyl-alpha-D-muramoyl-L-alanyl-D-glutamyl-meso-2,6-diaminopimeloyl-D-alanyl-D-alanine + UDP + H(+). The protein operates within cell wall biogenesis; peptidoglycan biosynthesis. In terms of biological role, cell wall formation. Catalyzes the transfer of a GlcNAc subunit on undecaprenyl-pyrophosphoryl-MurNAc-pentapeptide (lipid intermediate I) to form undecaprenyl-pyrophosphoryl-MurNAc-(pentapeptide)GlcNAc (lipid intermediate II). The chain is UDP-N-acetylglucosamine--N-acetylmuramyl-(pentapeptide) pyrophosphoryl-undecaprenol N-acetylglucosamine transferase from Mycobacterium tuberculosis (strain ATCC 25177 / H37Ra).